Consider the following 173-residue polypeptide: Large ribosomal subunit protein bL9 (173 aa).

Residues 151-173 (YDDTPDRTETEESTKELQEEHAE) form a disordered region.

Belongs to the bacterial ribosomal protein bL9 family.

Its function is as follows. Binds to the 23S rRNA. In Lawsonia intracellularis (strain PHE/MN1-00), this protein is Large ribosomal subunit protein bL9.